The sequence spans 376 residues: uncharacterized protein (376 aa).

Belongs to the mimivirus R1 family.

This is an uncharacterized protein from Acanthamoeba polyphaga mimivirus (APMV).